The sequence spans 352 residues: DNA integrity scanning protein DisA (352 aa).

One can recognise a DAC domain in the interval 3-143 (PQELIEKIKL…NYKYVVNQVD (141 aa)). ATP contacts are provided by residues Gly-71, Leu-89, and 102–106 (TRHRT).

The protein belongs to the DisA family. Homooctamer. The cofactor is Mg(2+).

It carries out the reaction 2 ATP = 3',3'-c-di-AMP + 2 diphosphate. Functionally, participates in a DNA-damage check-point. DisA forms globular foci that rapidly scan along the chromosomes searching for lesions. In terms of biological role, also has diadenylate cyclase activity, catalyzing the condensation of 2 ATP molecules into cyclic di-AMP (c-di-AMP). c-di-AMP likely acts as a signaling molecule that may couple DNA integrity with a cellular process. In Thermotoga petrophila (strain ATCC BAA-488 / DSM 13995 / JCM 10881 / RKU-1), this protein is DNA integrity scanning protein DisA.